We begin with the raw amino-acid sequence, 67 residues long: uncharacterized protein (67 aa).

This is an uncharacterized protein from Thermoproteus tenax virus 1 (strain KRA1) (TTV1).